Reading from the N-terminus, the 387-residue chain is L-aspartate:5-guanidino-3-methyl-2-oxopentanoate transaminase (387 aa).

Lysine 237 carries the post-translational modification N6-(pyridoxal phosphate)lysine.

It belongs to the class-I pyridoxal-phosphate-dependent aminotransferase family. Requires pyridoxal 5'-phosphate as cofactor.

It carries out the reaction (3R)-5-guanidino-3-methyl-2-oxopentanoate + L-aspartate = (3R)-3-methyl-L-arginine + oxaloacetate. It functions in the pathway antibiotic biosynthesis. Functionally, aminotransferase involved in the formation of the rare amino acid 3-methylarginine (MeArg), which is used as a potent antibiotic against the closely related soybean pathogen P.syringae pv. glycinea. Probably catalyzes transamination from the donor L-aspartate to 5-guanidino-3-methyl-2-oxopentanoic acid, generating 3-methylarginine. This Pseudomonas syringae pv. syringae protein is L-aspartate:5-guanidino-3-methyl-2-oxopentanoate transaminase.